The primary structure comprises 247 residues: Probable transcriptional regulatory protein Glov_1245 (247 aa).

This sequence belongs to the TACO1 family.

The protein localises to the cytoplasm. The chain is Probable transcriptional regulatory protein Glov_1245 from Trichlorobacter lovleyi (strain ATCC BAA-1151 / DSM 17278 / SZ) (Geobacter lovleyi).